A 335-amino-acid polypeptide reads, in one-letter code: 2-acylglycerol O-acyltransferase 1 (335 aa).

Helical transmembrane passes span 24–44 (WLLSFLLFAQVCLGIIVFLII) and 104–124 (YIFGFHPHGVLVVGAFGNFCT). N-linked (GlcNAc...) asparagine glycans are attached at residues Asn-125 and Asn-180.

Belongs to the diacylglycerol acyltransferase family.

It is found in the endoplasmic reticulum membrane. It catalyses the reaction a 2-acylglycerol + an acyl-CoA = a 1,2-diacylglycerol + CoA. The enzyme catalyses 2-(9Z-octadecenoyl)-glycerol + butanoyl-CoA = 1-butanoyl-2-(9Z-octadecenoyl)-glycerol + CoA. It carries out the reaction 2-(9Z-octadecenoyl)-glycerol + octanoyl-CoA = 1-octanoyl-2-(9Z-octadecenoyl)-glycerol + CoA. The catalysed reaction is 2-(9Z-octadecenoyl)-glycerol + dodecanoyl-CoA = 1-dodecanoyl-2-(9Z-octadecenoyl)-glycerol + CoA. It catalyses the reaction 2-(9Z-octadecenoyl)-glycerol + tetradecanoyl-CoA = 1-tetradecanoyl-2-(9Z-octadecenoyl)-glycerol + CoA. The enzyme catalyses 2-(9Z-octadecenoyl)-glycerol + hexadecanoyl-CoA = 1-hexadecanoyl-2-(9Z-octadecenoyl)-glycerol + CoA. It carries out the reaction 2-(9Z-octadecenoyl)-glycerol + octadecanoyl-CoA = 1-octadecanoyl-2-(9Z-octadecenoyl)-glycerol + CoA. The catalysed reaction is eicosanoyl-CoA + 2-(9Z-octadecenoyl)-glycerol = 1-eicosanoyl-2-(9Z-octadecenoyl)-glycerol + CoA. It catalyses the reaction 2-(9Z-octadecenoyl)-glycerol + (9Z)-octadecenoyl-CoA = 1,2-di-(9Z-octadecenoyl)-glycerol + CoA. The enzyme catalyses 2-(9Z-octadecenoyl)-glycerol + (9Z,12Z)-octadecadienoyl-CoA = 1-(9Z,12Z-octadecadienoyl)-2-(9Z-octadecenoyl)-glycerol + CoA. It carries out the reaction 2-(9Z-octadecenoyl)-glycerol + (5Z,8Z,11Z,14Z)-eicosatetraenoyl-CoA = 1-(5Z,8Z,11Z,14Z-eicosatetraenoyl)-2-(9Z-octadecenoyl)-glycerol + CoA. The catalysed reaction is a 2-acylglycerol + an acyl-CoA = a 1,2-diacyl-sn-glycerol + CoA. It catalyses the reaction a 2-acylglycerol + an acyl-CoA = a 2,3-diacyl-sn-glycerol + CoA. The enzyme catalyses a 1-acylglycerol + an acyl-CoA = a 1,2-diacylglycerol + CoA. It carries out the reaction 1-dodecanoylglycerol + (9Z)-octadecenoyl-CoA = 1-dodecanoyl-2-(9Z-octadecenoyl)-glycerol + CoA. The catalysed reaction is 1-tetradecanoylglycerol + (9Z)-octadecenoyl-CoA = 1-tetradecanoyl-2-(9Z-octadecenoyl)-glycerol + CoA. It catalyses the reaction 1-hexadecanoylglycerol + (9Z)-octadecenoyl-CoA = 1-hexadecanoyl-2-(9Z-octadecenoyl)-glycerol + CoA. The enzyme catalyses 1-(9Z-octadecenoyl)-glycerol + (9Z)-octadecenoyl-CoA = 1,2-di-(9Z-octadecenoyl)-glycerol + CoA. It carries out the reaction 1-(9Z,12Z-octadecadienoyl)-glycerol + (9Z)-octadecenoyl-CoA = 1-(9Z,12Z-octadecadienoyl)-2-(9Z-octadecenoyl)-glycerol + CoA. The catalysed reaction is 1-(9Z,12Z,15Z-octadecatrienoyl)-glycerol + (9Z)-octadecenoyl-CoA = 1-(9Z,12Z,15Z-octadecatrienoyl)-2-(9Z-octadecenoyl)-glycerol + CoA. It catalyses the reaction 1-(5Z,8Z,11Z,14Z-eicosatetraenoyl)-glycerol + (9Z)-octadecenoyl-CoA = 1-(5Z,8Z,11Z,14Z-eicosatetraenoyl)-2-(9Z-octadecenoyl)-glycerol + CoA. The enzyme catalyses a 1-acylglycerol + an acyl-CoA = a 1,3-diacylglycerol + CoA. It carries out the reaction 1-dodecanoylglycerol + (9Z)-octadecenoyl-CoA = 1-dodecanoyl-3-(9Z-octadecenoyl)-glycerol + CoA. The catalysed reaction is 1-hexadecanoylglycerol + (9Z)-octadecenoyl-CoA = 1-(9Z-octadecenoyl)-3-hexadecanoylglycerol + CoA. It catalyses the reaction 1-octadecanoylglycerol + (9Z)-octadecenoyl-CoA = 1-octadecanoyl-3-(9Z-octadecenoyl)-glycerol + CoA. The enzyme catalyses 1-(9Z-octadecenoyl)-sn-glycerol + (9Z)-octadecenoyl-CoA = 1,3-di-(9Z-octadecenoyl)-glycerol + CoA. It carries out the reaction 1-(9Z,12Z-octadecadienoyl)-glycerol + (9Z)-octadecenoyl-CoA = 1-(9Z-octadecenoyl)-3-(9Z,12Z-octadecadienoyl)-glycerol + CoA. The catalysed reaction is 1-(9Z,12Z,15Z-octadecatrienoyl)-glycerol + (9Z)-octadecenoyl-CoA = 1-(9Z,12Z,15Z-octadecatrienoyl)-3-(9Z-octadecenoyl)-glycerol + CoA. It catalyses the reaction a 1-acyl-sn-glycerol + an acyl-CoA = a 1,3-diacyl-sn-glycerol + CoA. The enzyme catalyses a 3-acyl-sn-glycerol + an acyl-CoA = a 1,3-diacyl-sn-glycerol + CoA. It carries out the reaction 3-octadecanoyl-sn-glycerol + (9Z)-octadecenoyl-CoA = 1-(9Z-octadecenoyl)-3-octadecanoyl-sn-glycerol + CoA. The protein operates within glycerolipid metabolism; triacylglycerol biosynthesis. Its function is as follows. Involved in glycerolipid synthesis and lipid metabolism. Catalyzes the formation of diacylglycerol, the precursor of triacylglycerol, by transferring the acyl chain of a fatty acyl-CoA to a monoacylglycerol, mainly at the sn-1 or sn-3 positions. It uses both sn-2-monoacylglycerol (2-acylglycerol) and sn-1-monoacylglycerol (1-acyl-sn-glycerol) equally well as substrates, and uses sn-3-monoacylglycerol (3-acyl-sn-glycerol) with lower efficiency. Probably not involved in absorption of dietary fat in the small intestine. This is 2-acylglycerol O-acyltransferase 1 (MOGAT1) from Bos taurus (Bovine).